Reading from the N-terminus, the 225-residue chain is Ribonuclease HII (225 aa).

In terms of domain architecture, RNase H type-2 spans 2-210; sequence GIVVGVDEAG…VRKLGGPWRS (209 aa). Residues Asp8, Glu9, and Asp107 each coordinate a divalent metal cation.

The protein belongs to the RNase HII family. Mn(2+) serves as cofactor. It depends on Mg(2+) as a cofactor.

The protein localises to the cytoplasm. The catalysed reaction is Endonucleolytic cleavage to 5'-phosphomonoester.. Endonuclease that specifically degrades the RNA of RNA-DNA hybrids. The protein is Ribonuclease HII (rnhB) of Aeropyrum pernix (strain ATCC 700893 / DSM 11879 / JCM 9820 / NBRC 100138 / K1).